The following is a 986-amino-acid chain: Ephrin type-A receptor 4 (986 aa).

An N-terminal signal peptide occupies residues 1–19 (MAGVPVGALLPLLVGVCGA). The Extracellular portion of the chain corresponds to 20–547 (VTGSRVYPAN…PIIGDGTNPT (528 aa)). The Eph LBD domain maps to 30–209 (EVTLLDSRSV…FYKKCPLTVR (180 aa)). Asparagine 235, asparagine 340, and asparagine 408 each carry an N-linked (GlcNAc...) asparagine glycan. 2 consecutive Fibronectin type-III domains span residues 328–439 (PPSA…TNQA) and 440–537 (APSP…TVPS). Residues 548–569 (VLLVSVAGSVVLVVILIAAFVI) traverse the membrane as a helical segment. At 570–986 (SRRRSKYSKA…QQMHGRMVPV (417 aa)) the chain is on the cytoplasmic side. Tyrosine 596 and tyrosine 602 each carry phosphotyrosine; by autocatalysis. Residues 621-882 (IKIEKVIGVG…QIVNMLDKLI (262 aa)) enclose the Protein kinase domain. ATP is bound by residues 627–635 (IGVGEFGEV) and lysine 653. Aspartate 746 (proton acceptor) is an active-site residue. Phosphotyrosine; by autocatalysis occurs at positions 779 and 928. Residues 911-975 (SAVVSVSDWL…LSSVQAMRSQ (65 aa)) form the SAM domain. Residues 984–986 (VPV) carry the PDZ-binding motif.

The protein belongs to the protein kinase superfamily. Tyr protein kinase family. Ephrin receptor subfamily. Interacts with the src family kinase, p59-Fyn, through the major phosphorylation site at position Tyr-602. Interacts (via PDZ motif) with SIPA1L1 (via PDZ domain); controls neuronal morphology through regulation of the RAP1 (RAP1A or RAP1B) and RAP2 (RAP2A, RAP2B or RAP2C) GTPases. In terms of tissue distribution, expressed at high levels in brain, with expression also detected in the kidney, lung, muscle and thymus.

It localises to the cell membrane. It is found in the early endosome. The enzyme catalyses L-tyrosyl-[protein] + ATP = O-phospho-L-tyrosyl-[protein] + ADP + H(+). Its function is as follows. Receptor tyrosine kinase which binds membrane-bound ephrin family ligands residing on adjacent cells, leading to contact-dependent bidirectional signaling into neighboring cells. The signaling pathway downstream of the receptor is referred to as forward signaling while the signaling pathway downstream of the ephrin ligand is referred to as reverse signaling. Highly promiscuous, it has the unique property among Eph receptors to bind and to be physiologically activated by both GPI-anchored ephrin-A and transmembrane ephrin-B ligands including EFNA1 and EFNB3. Upon activation by ephrin ligands, modulates cell morphology and integrin-dependent cell adhesion through regulation of the Rac, Rap and Rho GTPases activity. Plays an important role in the development of the nervous system controlling different steps of axonal guidance including the establishment of the corticospinal projections. This Gallus gallus (Chicken) protein is Ephrin type-A receptor 4 (EPHA4).